The chain runs to 255 residues: Indole-3-glycerol phosphate synthase (255 aa).

The protein belongs to the TrpC family.

It carries out the reaction 1-(2-carboxyphenylamino)-1-deoxy-D-ribulose 5-phosphate + H(+) = (1S,2R)-1-C-(indol-3-yl)glycerol 3-phosphate + CO2 + H2O. It functions in the pathway amino-acid biosynthesis; L-tryptophan biosynthesis; L-tryptophan from chorismate: step 4/5. In Streptococcus pneumoniae serotype 19F (strain G54), this protein is Indole-3-glycerol phosphate synthase.